We begin with the raw amino-acid sequence, 281 residues long: Ribosomal RNA small subunit methyltransferase A (281 aa).

S-adenosyl-L-methionine contacts are provided by Asn36, Leu38, Gly63, Glu84, Asp109, and Asn127.

Belongs to the class I-like SAM-binding methyltransferase superfamily. rRNA adenine N(6)-methyltransferase family. RsmA subfamily.

The protein resides in the cytoplasm. The catalysed reaction is adenosine(1518)/adenosine(1519) in 16S rRNA + 4 S-adenosyl-L-methionine = N(6)-dimethyladenosine(1518)/N(6)-dimethyladenosine(1519) in 16S rRNA + 4 S-adenosyl-L-homocysteine + 4 H(+). Specifically dimethylates two adjacent adenosines (A1518 and A1519) in the loop of a conserved hairpin near the 3'-end of 16S rRNA in the 30S particle. May play a critical role in biogenesis of 30S subunits. This is Ribosomal RNA small subunit methyltransferase A from Borreliella afzelii (strain PKo) (Borrelia afzelii).